Reading from the N-terminus, the 290-residue chain is ADP-dependent (S)-NAD(P)H-hydrate dehydratase (290 aa).

Residues 5 to 278 form the YjeF C-terminal domain; the sequence is NQTLLEKVII…RYLPKIMKII (274 aa). Residues Ala40, Gly103, and His152 each coordinate (6S)-NADPHX. An AMP-binding site is contributed by Gly218. Asp219 is a binding site for (6S)-NADPHX.

This sequence belongs to the NnrD/CARKD family. Homotetramer. The cofactor is Mg(2+).

The enzyme catalyses (6S)-NADHX + ADP = AMP + phosphate + NADH + H(+). The catalysed reaction is (6S)-NADPHX + ADP = AMP + phosphate + NADPH + H(+). In terms of biological role, catalyzes the dehydration of the S-form of NAD(P)HX at the expense of ADP, which is converted to AMP. Together with NAD(P)HX epimerase, which catalyzes the epimerization of the S- and R-forms, the enzyme allows the repair of both epimers of NAD(P)HX, a damaged form of NAD(P)H that is a result of enzymatic or heat-dependent hydration. The sequence is that of ADP-dependent (S)-NAD(P)H-hydrate dehydratase from Streptococcus pneumoniae (strain ATCC BAA-255 / R6).